Consider the following 92-residue polypeptide: Small ribosomal subunit protein uS19c (92 aa).

Belongs to the universal ribosomal protein uS19 family.

The protein resides in the plastid. Its subcellular location is the chloroplast. In terms of biological role, protein S19 forms a complex with S13 that binds strongly to the 16S ribosomal RNA. The sequence is that of Small ribosomal subunit protein uS19c from Nicotiana tomentosiformis (Tobacco).